The sequence spans 541 residues: Arginine-containing cyclodipeptide synthase avaA (541 aa).

A Conserved DDXXE motif motif is present at residues 428-432; the sequence is DDIAE.

The protein belongs to the arginine-containing cyclodipeptide synthase family.

It carries out the reaction L-tryptophyl-tRNA(Trp) + L-arginyl-tRNA(Arg) = cyclo(L-arginyl-L-tryptophyl) + tRNA(Trp) + tRNA(Arg) + H(+). It participates in secondary metabolite biosynthesis. In terms of biological role, arginine-containing cyclodipeptide synthase; part of the cluster that mediates the biosynthesis of a highly modified cyclo-arginine-tryptophan dipeptide (cRW). Within the pathway, avaA acts as the scaffold-generating enzyme and is responsible for formation of the cyclo-Arg-Trp diketopiperazine (cRW) from L-arginyl-tRNA(Arg) + L-tryptophanyl-tRNA(Trp). AvaB then acts as a multifunctional flavoenzyme that is responsible for generating the cyclo-Arg-formylkynurenine DKP, which can be deformylated by avaC. AvaB then catalyzes an additional N-oxidation followed by cyclization and dehydration. The next step is an N-acetylation of the guanidine group catalyzed by the arginine N-acetyltransferase AvaD. The role of the additional enzymes identified within the ava cluster still have to be determined. The protein is Arginine-containing cyclodipeptide synthase avaA of Aspergillus versicolor.